Consider the following 207-residue polypeptide: Ras-related protein RABH1d (207 aa).

16–23 (GDQSVGKT) provides a ligand contact to GTP. An Effector region motif is present at residues 38-46 (YQATIGIDF). GTP contacts are provided by residues 64–68 (DTAGQ), 122–125 (NKTD), and 152–153 (SA). 2 S-geranylgeranyl cysteine lipidation sites follow: Cys205 and Cys207. Cys207 bears the Cysteine methyl ester mark.

It belongs to the small GTPase superfamily. Rab family.

The protein resides in the golgi apparatus membrane. Its function is as follows. Protein transport. Regulator of membrane traffic from the Golgi apparatus towards the endoplasmic reticulum (ER). The protein is Ras-related protein RABH1d (RABH1D) of Arabidopsis thaliana (Mouse-ear cress).